The primary structure comprises 160 residues: 2-C-methyl-D-erythritol 2,4-cyclodiphosphate synthase (160 aa).

Residues aspartate 9 and histidine 11 each coordinate a divalent metal cation. 4-CDP-2-C-methyl-D-erythritol 2-phosphate contacts are provided by residues 9 to 11 and 35 to 36; these read DVH and HS. Histidine 43 is an a divalent metal cation binding site. Residues 57–59, 62–66, 101–107, 133–136, phenylalanine 140, and arginine 143 each bind 4-CDP-2-C-methyl-D-erythritol 2-phosphate; these read DIG, FPDTD, AEAPKMA, and TTSE.

It belongs to the IspF family. In terms of assembly, homotrimer. The cofactor is a divalent metal cation.

It catalyses the reaction 4-CDP-2-C-methyl-D-erythritol 2-phosphate = 2-C-methyl-D-erythritol 2,4-cyclic diphosphate + CMP. It functions in the pathway isoprenoid biosynthesis; isopentenyl diphosphate biosynthesis via DXP pathway; isopentenyl diphosphate from 1-deoxy-D-xylulose 5-phosphate: step 4/6. In terms of biological role, involved in the biosynthesis of isopentenyl diphosphate (IPP) and dimethylallyl diphosphate (DMAPP), two major building blocks of isoprenoid compounds. Catalyzes the conversion of 4-diphosphocytidyl-2-C-methyl-D-erythritol 2-phosphate (CDP-ME2P) to 2-C-methyl-D-erythritol 2,4-cyclodiphosphate (ME-CPP) with a corresponding release of cytidine 5-monophosphate (CMP). In Methylobacillus flagellatus (strain ATCC 51484 / DSM 6875 / VKM B-1610 / KT), this protein is 2-C-methyl-D-erythritol 2,4-cyclodiphosphate synthase.